We begin with the raw amino-acid sequence, 201 residues long: ATP-dependent Clp protease proteolytic subunit (201 aa).

Serine 101 serves as the catalytic Nucleophile. Histidine 126 is an active-site residue.

Belongs to the peptidase S14 family. As to quaternary structure, component of the chloroplastic Clp protease core complex.

It localises to the plastid. The protein resides in the chloroplast stroma. The enzyme catalyses Hydrolysis of proteins to small peptides in the presence of ATP and magnesium. alpha-casein is the usual test substrate. In the absence of ATP, only oligopeptides shorter than five residues are hydrolyzed (such as succinyl-Leu-Tyr-|-NHMec, and Leu-Tyr-Leu-|-Tyr-Trp, in which cleavage of the -Tyr-|-Leu- and -Tyr-|-Trp bonds also occurs).. In terms of biological role, cleaves peptides in various proteins in a process that requires ATP hydrolysis. Has a chymotrypsin-like activity. Plays a major role in the degradation of misfolded proteins. The chain is ATP-dependent Clp protease proteolytic subunit from Chaetosphaeridium globosum (Charophycean green alga).